The chain runs to 584 residues: MDVKRPKKIFTRSQIIDLIADGKVIVIYKNNVLNLTSWIKKHPGGDKAAYHMVGKDATDEMHAYHCDETVDTFTRFKIGEIEGPRWENLLPPIQGGIYAKGGHYGSLNNKNTSNKKTLDSKLDNDSSNSTSDLECLTTTNSCDSDISETEIANYKGIGFVPSVKPVVPQNQLVSKSNMDIVFPIIDEETKKKVIRNPKTLLNNYDNKLSQEDVMSLPALDYDSQQVLRDKYNELHQTIIDYGLYECDLWDYVREVTKIGSLFLYSLSFLKINQLFLSAVFMGMAWHQGTFIAHDAGHIGITHNYQIDNIFGMLIADWFGGLSLGWWKRNHNVHHLITNDPVHDPDIQHLPFFAVSVRLFQNVYSTYYDKILPFDKFSQFLIPLQKYLYYPILCFGRFNLYRLSWTHVLCGQGPRQGKAAWFRYFEFFGLSFFFYWFFYLLVFKTIEGGWNRFNYVMVSHITTMLVHVQITLSHFAMSTADLGVSESFPSRQVRTTMDVDCPEWLDFLHGGLQFQAIHHLFPRLPRHNLRKAQPFVIKFCEEVGLSYSIYGFGEGNEIVISRLADIGKQCSIFLDATKHYEGDLY.

Positions 7 to 82 (KKIFTRSQII…FTRFKIGEIE (76 aa)) constitute a Cytochrome b5 heme-binding domain. Heme-binding residues include histidine 42 and histidine 65. The segment at 109 to 134 (NKNTSNKKTLDSKLDNDSSNSTSDLE) is disordered. A helical transmembrane segment spans residues 261–281 (LFLYSLSFLKINQLFLSAVFM). The Histidine box-1 motif lies at 293–297 (HDAGH). The chain crosses the membrane as a helical span at residues 306–326 (IDNIFGMLIADWFGGLSLGWW). Residues 330 to 334 (HNVHH) carry the Histidine box-2 motif. Transmembrane regions (helical) follow at residues 386–403 (YLYY…YRLS), 423–443 (YFEF…LVFK), and 455–475 (VMVS…SHFA). Residues 514-518 (QAIHH) carry the Histidine box-3 motif.

This sequence belongs to the fatty acid desaturase type 1 family.

It localises to the membrane. It carries out the reaction an N-acylsphing-4-enine + 2 Fe(II)-[cytochrome b5] + O2 + 2 H(+) = a (4E,8E)-4-sphinga-4,8-dienine ceramide + 2 Fe(III)-[cytochrome b5] + 2 H2O. It participates in lipid metabolism; sphingolipid metabolism. In terms of biological role, delta(8)-fatty-acid desaturase which introduces a double bond at the 8-position in the long-chain base (LCB) of ceramides. Required for the formation of the di-unsaturated sphingoid base (E,E)-sphinga-4,8-dienine during glucosylceramide (GluCer) biosynthesis. This Candida albicans (strain SC5314 / ATCC MYA-2876) (Yeast) protein is Delta 8-(E)-sphingolipid desaturase.